A 222-amino-acid polypeptide reads, in one-letter code: FCS-Like Zinc finger 13 (222 aa).

Residues 149-192 (EFLSSCCLCKKKLQGKDIYMYKGEMGFCSAECRSVQIMNDERQE) form an FLZ-type zinc finger.

It belongs to the FLZ family. As to quaternary structure, interacts with KIN10 and KIN11 via its FLZ-type zinc finger domain. Interacts with KINB1, KINB2, KINB3 and SNF4 via its N-terminal part.

Its subcellular location is the nucleus. It is found in the cytoplasm. In terms of biological role, may act as an adapter to facilitate the interaction of SnRK1 complex with effector proteins, conferring tissue- and stimulus-type specific differences in the SnRK1 regulation pathway. The polypeptide is FCS-Like Zinc finger 13 (Arabidopsis thaliana (Mouse-ear cress)).